The chain runs to 495 residues: ATP synthase subunit alpha, chloroplastic (495 aa).

Residue 170 to 177 (GDRQTGKT) coordinates ATP.

Belongs to the ATPase alpha/beta chains family. F-type ATPases have 2 components, CF(1) - the catalytic core - and CF(0) - the membrane proton channel. CF(1) has five subunits: alpha(3), beta(3), gamma(1), delta(1), epsilon(1). CF(0) has four main subunits: a, b, b' and c.

The protein resides in the plastid. The protein localises to the chloroplast thylakoid membrane. The catalysed reaction is ATP + H2O + 4 H(+)(in) = ADP + phosphate + 5 H(+)(out). In terms of biological role, produces ATP from ADP in the presence of a proton gradient across the membrane. The alpha chain is a regulatory subunit. This chain is ATP synthase subunit alpha, chloroplastic, found in Cyanidioschyzon merolae (strain NIES-3377 / 10D) (Unicellular red alga).